Consider the following 491-residue polypeptide: Nucleoporin NUP42 (491 aa).

Residues 1-25 (MAICNFFLQGRCRYGEKCWNEHPRG) form a C3H1-type zinc finger. Disordered stretches follow at residues 23–82 (PRGG…SQRY) and 92–111 (TTWI…SGFG). Residues 33 to 64 (RYQSQNRYQEQSRYQEQSRYPEQSRYPEQNRY) are compositionally biased toward polar residues. FG repeat units follow at residues 110–111 (FG), 259–260 (FG), 302–303 (FG), 312–313 (FG), 333–334 (FG), 342–343 (FG), 363–364 (FG), 375–376 (FG), 379–380 (FG), and 410–411 (FG).

In terms of assembly, probable component of the nuclear pore complex (NPC).

The protein localises to the nucleus. It is found in the nuclear pore complex. The protein resides in the nucleus membrane. Functionally, required for the export of mRNAs containing poly(A) tails from the nucleus into the cytoplasm. The polypeptide is Nucleoporin NUP42 (nup42) (Xenopus laevis (African clawed frog)).